A 190-amino-acid polypeptide reads, in one-letter code: Potassium-transporting ATPase KdpC subunit (190 aa).

Residues 10–30 (TFLFLLLITGGVYPLLTTALG) form a helical membrane-spanning segment.

It belongs to the KdpC family. As to quaternary structure, the system is composed of three essential subunits: KdpA, KdpB and KdpC.

The protein resides in the cell inner membrane. Its function is as follows. Part of the high-affinity ATP-driven potassium transport (or Kdp) system, which catalyzes the hydrolysis of ATP coupled with the electrogenic transport of potassium into the cytoplasm. This subunit acts as a catalytic chaperone that increases the ATP-binding affinity of the ATP-hydrolyzing subunit KdpB by the formation of a transient KdpB/KdpC/ATP ternary complex. In Escherichia coli O6:H1 (strain CFT073 / ATCC 700928 / UPEC), this protein is Potassium-transporting ATPase KdpC subunit.